A 779-amino-acid polypeptide reads, in one-letter code: Kazrin (779 aa).

Residues 79-261 (AQVLLREEVV…LATLTKDVPK (183 aa)) are a coiled coil. Positions 295-366 (QQTLYHSHPP…PGPVQKSLHN (72 aa)) are disordered. 3 positions are modified to phosphoserine: S356, S371, and S391. Positions 403 to 429 (KSLDPGLFDDSDSQCSPTRHSLSLSEG) are disordered. Positions 415–426 (SQCSPTRHSLSL) are enriched in polar residues. SAM domains are found at residues 450–515 (WKAG…YRDA), 528–592 (DHHW…LYQV), and 616–683 (WTNQ…STIF). Positions 685-779 (PSNSTGIRES…GYGSLEVTNV (95 aa)) are disordered. Over residues 736-746 (SSKEPDFHDDY) the composition is skewed to basic and acidic residues.

It belongs to the kazrin family. In terms of tissue distribution, expressed in skin interfollicular epidermis and hair follicles. Expressed in tongue epithelium basal suprabasal layers.

It localises to the cell junction. It is found in the nucleus. The protein localises to the cytoplasm. The protein resides in the cytoskeleton. Its function is as follows. Component of the cornified envelope of keratinocytes. May be involved in the interplay between adherens junctions and desmosomes. The function in the nucleus is not known. This is Kazrin (Kazn) from Mus musculus (Mouse).